The chain runs to 386 residues: S-adenosylmethionine synthase (386 aa).

His-16 contacts ATP. Asp-18 contacts Mg(2+). Glu-44 is a binding site for K(+). The L-methionine site is built by Glu-57 and Gln-100. Residues 100–110 form a flexible loop region; that stretch reads QSPDINQGVDQ. Residues 164-166, 230-231, Asp-239, 245-246, Ala-262, and Lys-266 each bind ATP; these read DGK, RF, and RK. Asp-239 serves as a coordination point for L-methionine. Residue Lys-270 coordinates L-methionine.

Belongs to the AdoMet synthase family. As to quaternary structure, homotetramer; dimer of dimers. It depends on Mg(2+) as a cofactor. The cofactor is K(+).

The protein resides in the cytoplasm. It carries out the reaction L-methionine + ATP + H2O = S-adenosyl-L-methionine + phosphate + diphosphate. It functions in the pathway amino-acid biosynthesis; S-adenosyl-L-methionine biosynthesis; S-adenosyl-L-methionine from L-methionine: step 1/1. Its function is as follows. Catalyzes the formation of S-adenosylmethionine (AdoMet) from methionine and ATP. The overall synthetic reaction is composed of two sequential steps, AdoMet formation and the subsequent tripolyphosphate hydrolysis which occurs prior to release of AdoMet from the enzyme. The protein is S-adenosylmethionine synthase of Nitratiruptor sp. (strain SB155-2).